A 134-amino-acid polypeptide reads, in one-letter code: ATP synthase epsilon chain (134 aa).

The protein belongs to the ATPase epsilon chain family. F-type ATPases have 2 components, CF(1) - the catalytic core - and CF(0) - the membrane proton channel. CF(1) has five subunits: alpha(3), beta(3), gamma(1), delta(1), epsilon(1). CF(0) has three main subunits: a, b and c.

Its subcellular location is the cell membrane. Functionally, produces ATP from ADP in the presence of a proton gradient across the membrane. In Ruminococcus albus (strain ATCC 27210 / DSM 20455 / JCM 14654 / NCDO 2250 / 7), this protein is ATP synthase epsilon chain.